Reading from the N-terminus, the 739-residue chain is Xylosyl- and glucuronyltransferase LARGE2s (739 aa).

Residues 1 to 10 are Cytoplasmic-facing; the sequence is MLCSWRVKLK. Residues 11–31 traverse the membrane as a helical; Signal-anchor for type II membrane protein segment; it reads LLLATITLAVLLSWLYLFVGS. The Lumenal portion of the chain corresponds to 32 to 739; it reads LEYGRFLLLP…LKYLTAERNL (708 aa). A disordered region spans residues 80-105; that stretch reads AEGSDGNPQWAASAEDGPPLGGERNN. Asparagine 105, asparagine 131, and asparagine 217 each carry an N-linked (GlcNAc...) asparagine glycan. The interval 121-396 is xylosyltransferase activity; it reads LHVAIVCAGH…FLEYDGNLLR (276 aa). 2 residues coordinate Mn(2+): aspartate 225 and aspartate 227. An N-linked (GlcNAc...) asparagine glycan is attached at asparagine 255. Positions 397–739 are glucuronyltransferase activity; sequence RELFGCASLP…LKYLTAERNL (343 aa). The Mn(2+) site is built by aspartate 546 and aspartate 548.

It in the C-terminal section; belongs to the glycosyltransferase 49 family. In the N-terminal section; belongs to the glycosyltransferase 8 family. Mn(2+) serves as cofactor.

The protein resides in the golgi apparatus membrane. The catalysed reaction is 3-O-[beta-D-GlcA-(1-&gt;3)-beta-D-Xyl-(1-&gt;4)-Rib-ol-P-Rib-ol-P-3-beta-D-GalNAc-(1-&gt;3)-beta-D-GlcNAc-(1-&gt;4)-(O-6-P-alpha-D-Man)]-Thr-[protein] + UDP-alpha-D-xylose = 3-O-[alpha-D-Xyl-(1-&gt;3)-beta-D-GlcA-(1-&gt;4)-beta-D-Xyl-(1-&gt;4)-Rib-ol-P-Rib-ol-P-3-beta-D-GalNAc-(1-&gt;3)-beta-D-GlcNAc-(1-&gt;4)-(O-6-P-alpha-D-Man)]-Thr-[protein] + UDP + H(+). It catalyses the reaction 3-O-{(1-&gt;[3)-alpha-D-Xyl-(1-&gt;3)-beta-D-GlcA-(1-&gt;](n)-4)-beta-D-Xyl-(1-&gt;4)-Rib-ol-P-Rib-ol-P-3-beta-D-GalNAc-(1-&gt;3)-beta-D-GlcNAc-(1-&gt;4)-O-6-P-alpha-D-Man}-L-Thr-[protein] + UDP-alpha-D-glucuronate = 3-O-{beta-D-GlcA-(1-&gt;[3)-alpha-D-Xyl-(1-&gt;3)-beta-D-GlcA-(1-&gt;](n)-4)-beta-D-Xyl-(1-&gt;4)-Rib-ol-P-Rib-ol-P-3-beta-D-GalNAc-(1-&gt;3)-beta-D-GlcNAc-(1-&gt;4)-O-6-P-alpha-D-Man}-L-Thr-[protein] + UDP + H(+). The enzyme catalyses 3-O-{beta-D-GlcA-(1-&gt;[3)-alpha-D-Xyl-(1-&gt;3)-beta-D-GlcA-(1-&gt;](n)-4)-beta-D-Xyl-(1-&gt;4)-Rib-ol-P-Rib-ol-P-3-beta-D-GalNAc-(1-&gt;3)-beta-D-GlcNAc-(1-&gt;4)-O-6-P-alpha-D-Man}-L-Thr-[protein] + UDP-alpha-D-xylose = 3-O-{(1-&gt;[3)-alpha-D-Xyl-(1-&gt;3)-beta-D-GlcA-(1-&gt;](n+1)-4)-beta-D-Xyl-(1-&gt;4)-Rib-ol-P-Rib-ol-P-3-beta-D-GalNAc-(1-&gt;3)-beta-D-GlcNAc-(1-&gt;4)-O-6-P-alpha-D-Man}-L-Thr-[protein] + UDP + H(+). The protein operates within protein modification; protein glycosylation. Functionally, bifunctional glycosyltransferase with both alpha-1,3-xylosyltransferase and beta-1,3-glucuronyltransferase activities involved in the maturation of alpha-dystroglycan (DAG1) by glycosylation leading to DAG1 binding to laminin G-like domain-containing extracellular proteins with high affinity and in a phosphorylated-O-mannosyl trisaccharide dependent manner. Elongates the glucuronyl-beta-1,4-xylose-beta disaccharide primer structure by adding repeating units [-3-Xylose-alpha-1,3-GlcA-beta-1-] to produce a heteropolysaccharide. Supports the maturation of DAG1 more effectively than LARGE1. In addition, can modify both heparan sulfate (HS)- and chondroitin/dermatan sulfate (CS/DS)-proteoglycans (PGs), namely GPC4, with a glycosaminoglycan (GAG)-like polysaccharide composed of xylose and glucuronic acid to confer laminin binding. This chain is Xylosyl- and glucuronyltransferase LARGE2s, found in Gallus gallus (Chicken).